We begin with the raw amino-acid sequence, 118 residues long: Large ribosomal subunit protein bL17 (118 aa).

Belongs to the bacterial ribosomal protein bL17 family. Part of the 50S ribosomal subunit. Contacts protein L32.

The protein is Large ribosomal subunit protein bL17 of Gemmatimonas aurantiaca (strain DSM 14586 / JCM 11422 / NBRC 100505 / T-27).